A 407-amino-acid polypeptide reads, in one-letter code: Aurofusarin biosynthesis cluster protein S (407 aa).

A signal peptide spans 1–35 (MSKQKPSLWRALRALSFIISIPLLIQYLVLKWYST). 5 N-linked (GlcNAc...) asparagine glycosylation sites follow: Asn52, Asn174, Asn196, Asn274, and Asn312. FAS1 domains follow at residues 52 to 192 (NLTV…DTVL) and 195 to 365 (PNST…DSIL).

Might be part of an extracellular enzyme complex composed of GIP1, aurF, aurO and aurS.

Its subcellular location is the secreted. It localises to the extracellular space. The protein operates within pigment biosynthesis. Functionally, part of the gene cluster that mediates the biosynthesis of aurofusarin, a red mycelium pigment which is acting as a mycotoxin. The first step is performed by the polyketide synthase which condenses one acetyl-CoA and 6 malonyl-CoA units to form the first intermediate, the cyclic heptaketide and yellow pigment YWA1. The C2 hydroxyl group in the pyrone ring of YWA1 is probably formed during ring closure by an aldol-type cyclization reaction. The dehydratase aurZ then acts as the first tailoring enzyme in the aurofusarin biosynthetic pathway by converting YWA1 to nor-rubrofusarin. Nor-rubrofusarin is then methylated to rubrofusarin by the O-methyltransferase aurJ. Rubrofusarin is then transported across the plasma membrane by the rubrofusarin-specific pump aurT for further enzymatic processing by the extracellular complex composed of GIP1, aurF, aurO and aurS to yield aurofusarin. In Gibberella zeae (strain ATCC MYA-4620 / CBS 123657 / FGSC 9075 / NRRL 31084 / PH-1) (Wheat head blight fungus), this protein is Aurofusarin biosynthesis cluster protein S.